Here is a 205-residue protein sequence, read N- to C-terminus: Small ribosomal subunit protein uS4 (205 aa).

The tract at residues 18 to 46 (NIWGRPKSPVNRREYGPGQHGQRRKGKLS) is disordered. The region spanning 94-157 (RRLDTVVYRA…KQLAFVLEAS (64 aa)) is the S4 RNA-binding domain.

The protein belongs to the universal ribosomal protein uS4 family. As to quaternary structure, part of the 30S ribosomal subunit. Contacts protein S5. The interaction surface between S4 and S5 is involved in control of translational fidelity.

Its function is as follows. One of the primary rRNA binding proteins, it binds directly to 16S rRNA where it nucleates assembly of the body of the 30S subunit. With S5 and S12 plays an important role in translational accuracy. The sequence is that of Small ribosomal subunit protein uS4 from Rhodopseudomonas palustris (strain HaA2).